Reading from the N-terminus, the 132-residue chain is Large ribosomal subunit protein bL17 (132 aa).

It belongs to the bacterial ribosomal protein bL17 family. As to quaternary structure, part of the 50S ribosomal subunit. Contacts protein L32.

This Albidiferax ferrireducens (strain ATCC BAA-621 / DSM 15236 / T118) (Rhodoferax ferrireducens) protein is Large ribosomal subunit protein bL17.